We begin with the raw amino-acid sequence, 210 residues long: Large ribosomal subunit protein uL3 (210 aa).

Residues 131-155 (GPMSHGSKYHRRVGSMSATTDPGRT) are disordered.

Belongs to the universal ribosomal protein uL3 family. Part of the 50S ribosomal subunit. Forms a cluster with proteins L14 and L19.

One of the primary rRNA binding proteins, it binds directly near the 3'-end of the 23S rRNA, where it nucleates assembly of the 50S subunit. This is Large ribosomal subunit protein uL3 from Thermoanaerobacter sp. (strain X514).